The primary structure comprises 119 residues: Fluoride-specific ion channel FluC (119 aa).

Transmembrane regions (helical) follow at residues 5–25, 30–50, 59–79, and 92–112; these read IIPL…LNLA, LSPA…IGIF, WKLL…GFSL, and SALA…WLGL. Residues G69 and T72 each contribute to the Na(+) site.

Belongs to the fluoride channel Fluc/FEX (TC 1.A.43) family.

The protein resides in the cell inner membrane. It catalyses the reaction fluoride(in) = fluoride(out). Its activity is regulated as follows. Na(+) is not transported, but it plays an essential structural role and its presence is essential for fluoride channel function. Functionally, fluoride-specific ion channel. Important for reducing fluoride concentration in the cell, thus reducing its toxicity. The polypeptide is Fluoride-specific ion channel FluC (Neisseria meningitidis serogroup A / serotype 4A (strain DSM 15465 / Z2491)).